The sequence spans 382 residues: D-galactonate dehydratase (382 aa).

D183 is a Mg(2+) binding site. H185 serves as the catalytic Proton donor. Positions 209 and 235 each coordinate Mg(2+). H285 acts as the Proton acceptor in catalysis. The tract at residues 361–382 (NENPPDWRNPVWRHSDGSIAEW) is disordered.

It belongs to the mandelate racemase/muconate lactonizing enzyme family. GalD subfamily. The cofactor is Mg(2+).

The catalysed reaction is D-galactonate = 2-dehydro-3-deoxy-D-galactonate + H2O. Its pathway is carbohydrate acid metabolism; D-galactonate degradation; D-glyceraldehyde 3-phosphate and pyruvate from D-galactonate: step 1/3. Catalyzes the dehydration of D-galactonate to 2-keto-3-deoxy-D-galactonate. In Xanthomonas euvesicatoria pv. vesicatoria (strain 85-10) (Xanthomonas campestris pv. vesicatoria), this protein is D-galactonate dehydratase.